The following is an 86-amino-acid chain: High affinity immunoglobulin epsilon receptor subunit gamma (86 aa).

Positions 1-18 (MISAVILFLLLLVEQAAA) are cleaved as a signal peptide. At 19–23 (LGEPQ) the chain is on the extracellular side. A helical membrane pass occupies residues 24–44 (LCYILDAVLFLYGIVLTLLYC). Over 45 to 86 (RLKIQVRKAAIASREKADAVYTGLNTRSQETYETLKHEKPPQ) the chain is Cytoplasmic. The ITAM domain maps to 54-82 (AIASREKADAVYTGLNTRSQETYETLKHE). Phosphotyrosine is present on residues Tyr-65 and Tyr-76. The residue at position 78 (Thr-78) is a Phosphothreonine.

The protein belongs to the CD3Z/FCER1G family. As to quaternary structure, igE Fc receptor is a tetramer of an alpha chain, a beta chain, and two disulfide linked gamma chains. Associates with FCGR1A; forms a functional signaling complex. The signaling subunit of immunoglobulin gamma (IgG) Fc receptor complex. As a homodimer or a heterodimer of CD247 and FCER1G, associates with the ligand binding subunit FCGR3A to form a functional receptor complex. Associates with CLEC6A. Interacts with CLEC4E. Interacts (via ITAM domain) with SYK (via SH2 domains); activates SYK, enabling integrin-mediated activation of neutrophils and macrophages. Interacts with CSF2RB and recruits SYK in response to IL3 stimulation; this interaction is direct. Interacts with CD300LH; the interaction may be indirect. Interacts with CD300LD. Interacts with TARM1. As to expression, expressed in mast cells (at protein level). Expressed in basophils (at protein level).

It is found in the cell membrane. Its function is as follows. Adapter protein containing an immunoreceptor tyrosine-based activation motif (ITAM) that transduces activation signals from various immunoreceptors. As a component of the high-affinity immunoglobulin E (IgE) receptor, mediates allergic inflammatory signaling in mast cells. As a constitutive component of interleukin-3 receptor complex, selectively mediates interleukin 4/IL4 production by basophils, priming T-cells toward effector T-helper 2 subset. Associates with pattern recognition receptors CLEC4D and CLEC4E to form a functional signaling complex in myeloid cells. Binding of mycobacterial trehalose 6,6'-dimycolate (TDM) to this receptor complex leads to phosphorylation of ITAM, triggering activation of SYK, CARD9 and NF-kappa-B, consequently driving maturation of antigen-presenting cells and shaping antigen-specific priming of T-cells toward effector T-helper 1 and T-helper 17 cell subtypes. May function cooperatively with other activating receptors. Functionally linked to integrin beta-2/ITGB2-mediated neutrophil activation. Also involved in integrin alpha-2/ITGA2-mediated platelet activation. The sequence is that of High affinity immunoglobulin epsilon receptor subunit gamma from Mus musculus (Mouse).